We begin with the raw amino-acid sequence, 782 residues long: Coiled-coil alpha-helical rod protein 1 (782 aa).

Basic and acidic residues-rich tracts occupy residues E62–R74 and E208–L218. 2 disordered regions span residues E62–E82 and L182–L218. 3 coiled-coil regions span residues E82–R314, L344–S437, and V498–G691.

It is found in the cytoplasm. It localises to the nucleus. May be a regulator of keratinocyte proliferation or differentiation. This is Coiled-coil alpha-helical rod protein 1 (CCHCR1) from Pan paniscus (Pygmy chimpanzee).